Here is a 556-residue protein sequence, read N- to C-terminus: Formate--tetrahydrofolate ligase (556 aa).

65–72 (TPAGEGKT) is a binding site for ATP.

It belongs to the formate--tetrahydrofolate ligase family.

It carries out the reaction (6S)-5,6,7,8-tetrahydrofolate + formate + ATP = (6R)-10-formyltetrahydrofolate + ADP + phosphate. It functions in the pathway one-carbon metabolism; tetrahydrofolate interconversion. This chain is Formate--tetrahydrofolate ligase, found in Maricaulis maris (strain MCS10) (Caulobacter maris).